The chain runs to 293 residues: Glycine--tRNA ligase alpha subunit (293 aa).

It belongs to the class-II aminoacyl-tRNA synthetase family. As to quaternary structure, tetramer of two alpha and two beta subunits.

The protein localises to the cytoplasm. It carries out the reaction tRNA(Gly) + glycine + ATP = glycyl-tRNA(Gly) + AMP + diphosphate. This chain is Glycine--tRNA ligase alpha subunit, found in Sulfurimonas denitrificans (strain ATCC 33889 / DSM 1251) (Thiomicrospira denitrificans (strain ATCC 33889 / DSM 1251)).